We begin with the raw amino-acid sequence, 160 residues long: SsrA-binding protein (160 aa).

Belongs to the SmpB family.

Its subcellular location is the cytoplasm. Functionally, required for rescue of stalled ribosomes mediated by trans-translation. Binds to transfer-messenger RNA (tmRNA), required for stable association of tmRNA with ribosomes. tmRNA and SmpB together mimic tRNA shape, replacing the anticodon stem-loop with SmpB. tmRNA is encoded by the ssrA gene; the 2 termini fold to resemble tRNA(Ala) and it encodes a 'tag peptide', a short internal open reading frame. During trans-translation Ala-aminoacylated tmRNA acts like a tRNA, entering the A-site of stalled ribosomes, displacing the stalled mRNA. The ribosome then switches to translate the ORF on the tmRNA; the nascent peptide is terminated with the 'tag peptide' encoded by the tmRNA and targeted for degradation. The ribosome is freed to recommence translation, which seems to be the essential function of trans-translation. This chain is SsrA-binding protein, found in Pasteurella multocida (strain Pm70).